A 724-amino-acid chain; its full sequence is Sorting nexin mvp1 (724 aa).

The span at 1–17 shows a compositional bias: polar residues; sequence MSLFGTSPEDSSAGNSA. Disordered regions lie at residues 1–39, 176–242, and 265–342; these read MSLFGTSPEDSSAGNSAHRSKSSLFADEPSLGTGSNANL, KSLY…HAHA, and SSRV…SLGI. A compositionally biased stretch (polar residues) spans 272-292; it reads NNPNEISNSNRANSQTDSAPS. A compositionally biased stretch (gly residues) spans 310 to 324; the sequence is GGLGGTARAGLGGFG. In terms of domain architecture, PX spans 351–459; it reads EEHVTVTLLP…IMFLTVPTEL (109 aa). Residues arginine 387, serine 389, lysine 413, and arginine 426 each contribute to the a 1,2-diacyl-sn-glycero-3-phospho-(1D-myo-inositol-3-phosphate) site.

The protein belongs to the sorting nexin family.

The protein resides in the cytoplasm. Its subcellular location is the membrane. In terms of biological role, required for vacuolar protein sorting. In Aspergillus oryzae (strain ATCC 42149 / RIB 40) (Yellow koji mold), this protein is Sorting nexin mvp1 (mvp1).